Here is a 119-residue protein sequence, read N- to C-terminus: Fluoride-specific ion channel FluC 2 (119 aa).

The chain crosses the membrane as a helical span at residues 46 to 66; the sequence is FALGLLTFAGVTGDAALLVGV. 2 residues coordinate Na(+): glycine 70 and threonine 73. A helical transmembrane segment spans residues 96-116; the sequence is LNAVGNLACALVGIGLAWGIV.

The protein belongs to the fluoride channel Fluc/FEX (TC 1.A.43) family.

The protein resides in the cell membrane. It catalyses the reaction fluoride(in) = fluoride(out). Na(+) is not transported, but it plays an essential structural role and its presence is essential for fluoride channel function. Fluoride-specific ion channel. Important for reducing fluoride concentration in the cell, thus reducing its toxicity. The protein is Fluoride-specific ion channel FluC 2 of Haloarcula marismortui (strain ATCC 43049 / DSM 3752 / JCM 8966 / VKM B-1809) (Halobacterium marismortui).